Here is a 155-residue protein sequence, read N- to C-terminus: Catabolic 3-dehydroquinase (155 aa).

Tyr24 serves as the catalytic Proton acceptor. Residues Asn75, His81, and Asp88 each contribute to the substrate site. Residue His101 is the Proton donor of the active site. Substrate contacts are provided by residues 102 to 103 and Arg112; that span reads VS.

The protein belongs to the type-II 3-dehydroquinase family. As to quaternary structure, homododecamer. Adopts a ring-like structure, composed of an arrangement of two hexameric rings stacked on top of one another.

The enzyme catalyses 3-dehydroquinate = 3-dehydroshikimate + H2O. The protein operates within aromatic compound metabolism; 3,4-dihydroxybenzoate biosynthesis; 3,4-dihydroxybenzoate from 3-dehydroquinate: step 1/2. Its function is as follows. Is involved in the catabolism of quinate. Allows the utilization of quinate as carbon source via the beta-ketoadipate pathway. This Penicillium rubens (strain ATCC 28089 / DSM 1075 / NRRL 1951 / Wisconsin 54-1255) (Penicillium chrysogenum) protein is Catabolic 3-dehydroquinase.